The sequence spans 51 residues: Ovomucoid (51 aa).

In terms of domain architecture, Kazal-like spans 3–51 (VDCSGYPKPACTLEYFPLCGSDNQTYANKCAFCNAVVEKNVTLRHLGKC). 3 disulfides stabilise this stretch: cysteine 5-cysteine 35, cysteine 13-cysteine 32, and cysteine 21-cysteine 51. An N-linked (GlcNAc...) asparagine glycan is attached at asparagine 42.

Its subcellular location is the secreted. The protein is Ovomucoid of Nothoprocta cinerascens (Brushland tinamou).